A 279-amino-acid polypeptide reads, in one-letter code: Prephenate dehydratase (279 aa).

Positions 2-178 constitute a Prephenate dehydratase domain; the sequence is KIAYLGPRGS…NSTRFWLLGK (177 aa). Positions 194-272 constitute an ACT domain; that stretch reads LALTLPDNLP…VNVRLLGNYS (79 aa).

It carries out the reaction prephenate + H(+) = 3-phenylpyruvate + CO2 + H2O. It participates in amino-acid biosynthesis; L-phenylalanine biosynthesis; phenylpyruvate from prephenate: step 1/1. The chain is Prephenate dehydratase (pheA) from Lactococcus lactis subsp. cremoris (strain MG1363).